The primary structure comprises 197 residues: Imidazoleglycerol-phosphate dehydratase (197 aa).

The protein belongs to the imidazoleglycerol-phosphate dehydratase family.

Its subcellular location is the cytoplasm. The catalysed reaction is D-erythro-1-(imidazol-4-yl)glycerol 3-phosphate = 3-(imidazol-4-yl)-2-oxopropyl phosphate + H2O. It functions in the pathway amino-acid biosynthesis; L-histidine biosynthesis; L-histidine from 5-phospho-alpha-D-ribose 1-diphosphate: step 6/9. The polypeptide is Imidazoleglycerol-phosphate dehydratase (Erythrobacter litoralis (strain HTCC2594)).